We begin with the raw amino-acid sequence, 358 residues long: Nicotinate-nucleotide--dimethylbenzimidazole phosphoribosyltransferase (358 aa).

Glutamate 323 acts as the Proton acceptor in catalysis.

This sequence belongs to the CobT family.

The catalysed reaction is 5,6-dimethylbenzimidazole + nicotinate beta-D-ribonucleotide = alpha-ribazole 5'-phosphate + nicotinate + H(+). It functions in the pathway nucleoside biosynthesis; alpha-ribazole biosynthesis; alpha-ribazole from 5,6-dimethylbenzimidazole: step 1/2. Functionally, catalyzes the synthesis of alpha-ribazole-5'-phosphate from nicotinate mononucleotide (NAMN) and 5,6-dimethylbenzimidazole (DMB). This is Nicotinate-nucleotide--dimethylbenzimidazole phosphoribosyltransferase from Oleidesulfovibrio alaskensis (strain ATCC BAA-1058 / DSM 17464 / G20) (Desulfovibrio alaskensis).